The chain runs to 490 residues: Ribulose bisphosphate carboxylase large chain (490 aa).

Positions 127 and 177 each coordinate substrate. K179 (proton acceptor) is an active-site residue. K181 is a binding site for substrate. Residues K205, D207, and E208 each coordinate Mg(2+). K205 carries the post-translational modification N6-carboxylysine. H297 (proton acceptor) is an active-site residue. Positions 298, 330, and 382 each coordinate substrate.

This sequence belongs to the RuBisCO large chain family. Type I subfamily. As to quaternary structure, heterohexadecamer of 8 large chains and 8 small chains. Requires Mg(2+) as cofactor.

The protein localises to the plastid. It localises to the chloroplast. It catalyses the reaction 2 (2R)-3-phosphoglycerate + 2 H(+) = D-ribulose 1,5-bisphosphate + CO2 + H2O. The enzyme catalyses D-ribulose 1,5-bisphosphate + O2 = 2-phosphoglycolate + (2R)-3-phosphoglycerate + 2 H(+). In terms of biological role, ruBisCO catalyzes two reactions: the carboxylation of D-ribulose 1,5-bisphosphate, the primary event in carbon dioxide fixation, as well as the oxidative fragmentation of the pentose substrate in the photorespiration process. Both reactions occur simultaneously and in competition at the same active site. This is Ribulose bisphosphate carboxylase large chain from Thalassiosira pseudonana (Marine diatom).